A 684-amino-acid polypeptide reads, in one-letter code: Signal peptide peptidase-like 2C (684 aa).

Positions 1-21 (MACLGFLLPVGFLLLISTVAG) are cleaved as a signal peptide. At 22–186 (GKYGVAHVVS…APPEPIIDYN (165 aa)) the chain is on the lumenal side. The region spanning 83–163 (SPSQRPLRQT…HYADMLDILS (81 aa)) is the PA domain. Asn-100 carries N-linked (GlcNAc...) asparagine glycosylation. A helical transmembrane segment spans residues 187-207 (MLVIFILAVGTVAAGGYWAGL). Over 208–253 (TEANRLQRRRARRGGGSGGHHQLQEAAAAEGAQKEDNEDIPVDFTP) the chain is Cytoplasmic. The tract at residues 216–242 (RRARRGGGSGGHHQLQEAAAAEGAQKE) is disordered. Residues 227–238 (HHQLQEAAAAEG) are compositionally biased toward low complexity. A helical membrane pass occupies residues 254–274 (AMTGVVVTLSCSLMLLLYFFY). Topologically, residues 275-276 (DH) are lumenal. A helical transmembrane segment spans residues 277-297 (FVYVTIGIFGLGAGIGLYSCL). Residues 298–319 (SPLVCRLSLRQYQRPPHSLWAS) lie on the Cytoplasmic side of the membrane. Residues 320–340 (LPLPLLLLASLCATVIIFWVA) traverse the membrane as a helical segment. The Lumenal segment spans residues 341–346 (YRNEDR). A helical transmembrane segment spans residues 347-365 (WAWLLQDTLGISYCLFVLH). At 366–376 (RVRLPTLKNCS) the chain is on the cytoplasmic side. Residues 377–397 (SFLLALLAFDVFFVFVTPFFT) traverse the membrane as a helical segment. Asp-386 is a catalytic residue. Over 398–439 (KTGESIMAQVALGPAESSSHERLPMVLKVPRLRVSALTLCSQ) the chain is Lumenal. Residues 440–460 (PFSILGFGDIVVPGFLVAYCC) form a helical membrane-spanning segment. Residue Asp-448 is part of the active site. The Cytoplasmic segment spans residues 461–472 (RFDVQVCSRQIY). A helical membrane pass occupies residues 473–493 (FVACTVAYAVGLLVTFMAMVL). Topologically, residues 494-495 (MQ) are lumenal. Residues 496 to 516 (MGQPALLYLVSSTLLTSLAVA) form a helical membrane-spanning segment. Positions 499–501 (PAL) match the PAL motif. At 517-684 (ACRQELSLFW…RKSMSTQAPL (168 aa)) the chain is on the cytoplasmic side. Residues 548–614 (KQEGAADAHT…SDAHLDPNEL (67 aa)) are disordered. Residues 582-592 (EIVTISENEAT) are compositionally biased toward polar residues. Residues 594–611 (PEDRSDSSEGWSDAHLDP) show a composition bias toward basic and acidic residues.

The protein belongs to the peptidase A22B family. In terms of assembly, interacts (via active sites) with FREY; the interaction stabilizes FREY1 protein and inhibits SPPL2C proteolytic activity. In terms of processing, glycosylated. In terms of tissue distribution, highly expressed in testis where it is primarily localised in spermatids (at protein level).

It localises to the endoplasmic reticulum membrane. Functionally, sperm-specific intramembrane-cleaving aspartic protease (I-CLiP) that cleaves distinct tail-anchored proteins and SNARE proteins. In elongated spermatids, modulates intracellular Ca(2+) homeostasis by controlling PLN abundance through proteolytic cleavage. During spermatogenesis, processes SNARE proteins and impacts vesicular trafficking which supports compartmental reorganization in maturating spermatids and may play a role in formation of the acrosome. In round spermatids, acts as a scaffold protein supporting FREY1 in IZUMO1 recruitment at the endoplasmic reticulum membrane and coordination of IZUMO1 complex assembly. Stabilizes FREY1 at the endoplasmic reticulum membrane through interaction. May recruit IZUMO1 interaction partners. The chain is Signal peptide peptidase-like 2C from Homo sapiens (Human).